A 1400-amino-acid polypeptide reads, in one-letter code: MSSHKSTTKSSSSGSSMSLILGFSKSMEKGNYNFSKENKKNRSFGVLYAMIKGNTFPRILTIISLLIEFCQLSSFGFKQQYPWGGDAGYYLKRIMSPVSHPSNLVGYNGFTIFFWIVIGLLLLGFFNIWYVAYQFYRGKIANIWIIRTLRWFVSTTVAVLFIPIISLLLIGLDCDYSQGGILKTFSNDNIYCFKGANLSIAIVSIILIIVFSIVGFTSSATYYEYDTNVKSRFSKPHARFDVYILFVKLILALLNSLVDFSPWTTSIVYFILSITLVFGSIIILPYNNQRLNQVKSGFYTTVFWVSFMTLVTMGINDETTATTCYITIVGAFFAFPIGYFSNRFYYNWLSSKIDQLKLPTSSSTNDFNEITKNEKSKTGDSKEKESSSPSKVTWGKQPITLGSKRQIIFPFFQNKFVMSFFVEIMVRKLLRSSNGSNGDDGISSNSNESIEHANNLYQCGLQYFPNSDLLWMAYCNFLFTVRKDRHIGYAALEKLRRMKPSFDVRFFIYQRDKEREQIMDSDLRGPEHTGKIQDFVSYMEFKKLYYGAKRHHVKCLTYIKKFWGLLLHETVDLHRLSDLSGRIATTENKANESYERLLALNPNSVRVLRDYSQFLEEVVKDTESSYKLQKKAEAIEDIMSKSQTTDFKTIDIKNLDNSDTELDQVLKQESNAIQLAKIDADIERSGSKSGSSKSKDDSSESSSSSKGRRGKYKEFQQSNAINKLSWLMIGTTACCIIFLIVMLIVLRDLSVKHTHSYQGIISITDCASEAVSIAINLNTMQAISISAGSVAFPFEAAEAMITQYRKQNDRSLIIMKNIHDAIYWGEGDPTSYVGDNLSKLKSINGFDVFDIGSTIFSFEEFNRSSTLVDNKEMIDIYSTPSVNMTILVSPPGTNSTNYITVTQTYNAWKAGNSFYESALIANKMSVQDIKDRAVFDPDFKFIILNAPSNIPEMYMKIQQVYIKSLIDDINTTLDTMLYVWVAIFCFLIILGAVLFRPIVTKISREKIRTLVLFSLAPKDVVFKLSSKKIKMTSLDSGSERDNLFDTTDDDAADGIDNHEHLQVDERKKNDDIIDDGSIVNRSINFGSHRRPLMNSTNVLASTTTINRGTISNRLNEDHDKVPLIENSISNNNKGYGWDGKSKRNLNKKSLRSVLRRLHWSYVLAIFLLFGFITMGLWVTYSVVHDNTQSGYVLGKSCSRSLDSRIINYYIAELYTFDNDANENEALEAVLQLQSNHQSLPYLEDVRPLMEGSYGCWMLNKSNCITSDSIYYNDVSIGLDWLVDQYTKHSVSLVNTDPSLLSTSPELGWMQAIGSDVVFQGLDTATFTYFQYYLSQKDWATKVLTSVLAISCVLLLVIHLLLFRPFMNHLRIQHIHTLALLRLAPDDIRFMEVSDKVIDED.

8 consecutive transmembrane segments (helical) span residues 59-79 (ILTIISLLIEFCQLSSFGFKQ), 112-132 (IFFWIVIGLLLLGFFNIWYVA), 152-172 (FVSTTVAVLFIPIISLLLIGL), 196-216 (ANLSIAIVSIILIIVFSIVGF), 240-260 (FDVYILFVKLILALLNSLVDF), 266-286 (SIVYFILSITLVFGSIIILPY), 296-316 (SGFYTTVFWVSFMTLVTMGIN), and 320-340 (TATTCYITIVGAFFAFPIGYF). Disordered regions lie at residues 367-393 (FNEITKNEKSKTGDSKEKESSSPSKVT) and 683-712 (ERSGSKSGSSKSKDDSSESSSSSKGRRGKY). Over residues 369–386 (EITKNEKSKTGDSKEKES) the composition is skewed to basic and acidic residues. The next 4 membrane-spanning stretches (helical) occupy residues 726–746 (WLMIGTTACCIIFLIVMLIVL), 975–995 (TMLYVWVAIFCFLIILGAVLF), 1162–1182 (VLAIFLLFGFITMGLWVTYSV), and 1342–1362 (VLTSVLAISCVLLLVIHLLLF).

The protein resides in the membrane. This Dictyostelium discoideum (Social amoeba) protein is Tiny macrocysts protein C (tmcC).